Consider the following 339-residue polypeptide: Transmembrane protein 120B (339 aa).

Residues 1–77 (MSGQLERCER…ASREEAELVQ (77 aa)) are a coiled coil. The next 6 membrane-spanning stretches (helical) occupy residues 102-124 (GLYL…AKFA), 132-152 (FKLY…FVLH), 159-179 (VFNF…SILI), 187-207 (GWWV…LTWP), 270-290 (FLLP…VTLF), and 302-322 (QVFV…LTTL).

It belongs to the TMEM120 family. Heterooligomer with TMEM120A.

The protein resides in the nucleus inner membrane. In terms of biological role, necessary for efficient adipogenesis. Does not show ion channel activity. The chain is Transmembrane protein 120B from Homo sapiens (Human).